The following is a 79-amino-acid chain: Cytochrome c oxidase subunit 7A1, mitochondrial (79 aa).

The N-terminal 21 residues, 1-21 (MQALRVSRALIRSFNTTARNR), are a transit peptide targeting the mitochondrion. Over 22–46 (FQNRVPEKQKLFQEDNDIPLYLKGG) the chain is Mitochondrial matrix. The helical transmembrane segment at 47-75 (IVDNILYRVTMGLCLGGSAYSMYCLGWAS) threads the bilayer. At 76–79 (FPRN) the chain is on the mitochondrial intermembrane side.

This sequence belongs to the cytochrome c oxidase VIIa family. In terms of assembly, component of the complex IV (CIV, cytochrome c oxidase), a multisubunit enzyme composed of 14 subunits. The complex is composed of a catalytic core of 3 subunits MT-CO1, MT-CO2 and MT-CO3, encoded in the mitochondrial DNA, and 11 supernumerary subunits COX4I1 (or COX4I2), COX5A, COX5B, COX6A2 (or COX6A1), COX6B1 (or COX6B2), COX6C, COX7A1 (or COX7A2), COX7B, COX7C, COX8B and NDUFA4, which are encoded in the nuclear genome. The complex exists as a monomer or a dimer and forms supercomplexes (SCs) in the inner mitochondrial membrane with NADH-ubiquinone oxidoreductase (complex I, CI) and ubiquinol-cytochrome c oxidoreductase (cytochrome b-c1 complex, complex III, CIII), resulting in different assemblies (supercomplex SCI(1)III(2)IV(1) and megacomplex MCI(2)III(2)IV(2)).

Its subcellular location is the mitochondrion inner membrane. Its pathway is energy metabolism; oxidative phosphorylation. In terms of biological role, component of the mitochondrial respiratory complex IV (CIV, also named cytochrome c oxidase complex), the last enzyme in the mitochondrial electron transport chain which drives oxidative phosphorylation. The CIV complex is the component of the respiratory chain that catalyzes the reduction of oxygen to water. Acts as an assembly factor that specifically drives the homodimerization of CIV complexes, mediating the formation of mitochondrial respiratory supercomplexes (respirasomes) containing two CIV: supercomplxes with two molecules of CIV show improved activity. Despite being highly expressed in brown adipose tissue, not required for thermogenesis. The polypeptide is Cytochrome c oxidase subunit 7A1, mitochondrial (COX7A1) (Trachypithecus cristatus (Silvered leaf-monkey)).